Reading from the N-terminus, the 245-residue chain is 1-(5-phosphoribosyl)-5-[(5-phosphoribosylamino)methylideneamino] imidazole-4-carboxamide isomerase (245 aa).

The active-site Proton acceptor is the D8. D131 acts as the Proton donor in catalysis.

This sequence belongs to the HisA/HisF family.

It is found in the cytoplasm. The enzyme catalyses 1-(5-phospho-beta-D-ribosyl)-5-[(5-phospho-beta-D-ribosylamino)methylideneamino]imidazole-4-carboxamide = 5-[(5-phospho-1-deoxy-D-ribulos-1-ylimino)methylamino]-1-(5-phospho-beta-D-ribosyl)imidazole-4-carboxamide. It participates in amino-acid biosynthesis; L-histidine biosynthesis; L-histidine from 5-phospho-alpha-D-ribose 1-diphosphate: step 4/9. In Neisseria gonorrhoeae (strain ATCC 700825 / FA 1090), this protein is 1-(5-phosphoribosyl)-5-[(5-phosphoribosylamino)methylideneamino] imidazole-4-carboxamide isomerase.